The primary structure comprises 476 residues: Aspartyl/glutamyl-tRNA(Asn/Gln) amidotransferase subunit B (476 aa).

The protein belongs to the GatB/GatE family. GatB subfamily. As to quaternary structure, heterotrimer of A, B and C subunits.

It catalyses the reaction L-glutamyl-tRNA(Gln) + L-glutamine + ATP + H2O = L-glutaminyl-tRNA(Gln) + L-glutamate + ADP + phosphate + H(+). The enzyme catalyses L-aspartyl-tRNA(Asn) + L-glutamine + ATP + H2O = L-asparaginyl-tRNA(Asn) + L-glutamate + ADP + phosphate + 2 H(+). Allows the formation of correctly charged Asn-tRNA(Asn) or Gln-tRNA(Gln) through the transamidation of misacylated Asp-tRNA(Asn) or Glu-tRNA(Gln) in organisms which lack either or both of asparaginyl-tRNA or glutaminyl-tRNA synthetases. The reaction takes place in the presence of glutamine and ATP through an activated phospho-Asp-tRNA(Asn) or phospho-Glu-tRNA(Gln). This Bacillus licheniformis (strain ATCC 14580 / DSM 13 / JCM 2505 / CCUG 7422 / NBRC 12200 / NCIMB 9375 / NCTC 10341 / NRRL NRS-1264 / Gibson 46) protein is Aspartyl/glutamyl-tRNA(Asn/Gln) amidotransferase subunit B.